The chain runs to 1349 residues: Indole-3-acetaldehyde oxidase (1349 aa).

Residues 7 to 94 (AAVVLAVNGK…RCSVTTSEGI (88 aa)) form the 2Fe-2S ferredoxin-type domain. [2Fe-2S] cluster contacts are provided by Cys46, Cys51, and Cys54. An FAD-binding PCMH-type domain is found at 237–415 (VPVSDDGWYR…LSIFIPEWGS (179 aa)).

Belongs to the xanthine dehydrogenase family. Aldehyde oxidases (AO) are homodimers and heterodimers of AO subunits. Requires [2Fe-2S] cluster as cofactor. It depends on FAD as a cofactor. Mo-molybdopterin serves as cofactor. In terms of tissue distribution, mostly expressed in coleoptiles, and, to a lower extent, in mesocotyl and roots.

The protein localises to the cytoplasm. It catalyses the reaction indole-3-acetaldehyde + O2 + H2O = (indol-3-yl)acetate + H2O2 + H(+). In terms of biological role, in higher plants aldehyde oxidases (AO) appear to be homo- and heterodimeric assemblies of AO subunits with probably different physiological functions. Involved in the biosynthesis of auxin. This chain is Indole-3-acetaldehyde oxidase (AO2), found in Zea mays (Maize).